The primary structure comprises 444 residues: UDP-N-acetylmuramate--L-alanine ligase (444 aa).

111–117 (GAHGKTS) contributes to the ATP binding site.

Belongs to the MurCDEF family.

The protein resides in the cytoplasm. The catalysed reaction is UDP-N-acetyl-alpha-D-muramate + L-alanine + ATP = UDP-N-acetyl-alpha-D-muramoyl-L-alanine + ADP + phosphate + H(+). Its pathway is cell wall biogenesis; peptidoglycan biosynthesis. Cell wall formation. The chain is UDP-N-acetylmuramate--L-alanine ligase from Leuconostoc mesenteroides subsp. mesenteroides (strain ATCC 8293 / DSM 20343 / BCRC 11652 / CCM 1803 / JCM 6124 / NCDO 523 / NBRC 100496 / NCIMB 8023 / NCTC 12954 / NRRL B-1118 / 37Y).